The following is a 719-amino-acid chain: Solute carrier organic anion transporter family member 6A1 (719 aa).

The interval 1 to 46 is disordered; the sequence is MFVGVARHSGSQDEVSRGVEPLEAARAQPAKDRRAKGTPKSSKPGK. Over 1-106 the chain is Cytoplasmic; the sequence is MFVGVARHSG…TCCECCNNIR (106 aa). Positions 33–46 are enriched in basic residues; that stretch reads RRAKGTPKSSKPGK. Residues 107–126 traverse the membrane as a helical segment; that stretch reads CFMIFYCILLICQGVVFGLI. At 127 to 145 the chain is on the extracellular side; that stretch reads DVSIGDFQKEYQLKTIEKL. A helical membrane pass occupies residues 146–166; the sequence is ALEKSYDISSGLVAIFIAFYG. Residues 167–171 are Cytoplasmic-facing; sequence DRKKV. A helical transmembrane segment spans residues 172 to 196; sequence IWFVASSFLIGLGSLLCAFPSINEE. The Extracellular segment spans residues 197–223; sequence NKQSKVGIEDICEEIKVVSGCQSSGIS. A helical membrane pass occupies residues 224 to 254; it reads FQSKYLSFFILGQTVQGIAGMPLYILGITFI. Residues 255–274 lie on the Cytoplasmic side of the membrane; the sequence is DENVATHSAGIYLGIAECTS. The chain crosses the membrane as a helical span at residues 275–295; sequence MIGYALGYVLGAPLVKVPENT. The Extracellular portion of the chain corresponds to 296 to 311; it reads TSATNTTVNNGSPEWL. Asparagine 300 carries an N-linked (GlcNAc...) asparagine glycan. A helical membrane pass occupies residues 312-336; it reads WTWWINFLFAAVVAWCTLIPLSCFP. Residues 337-378 lie on the Cytoplasmic side of the membrane; sequence NNMPGSTRIKARKRKQLHFFDSRLKDLKLGTNIKDLCAALWI. Residues 379–400 form a helical membrane-spanning segment; the sequence is LMKNPVLICLALSKATEYLVII. Over 401–420 the chain is Extracellular; that stretch reads GASEFLPIYLENQFILTPTV. Residues 421-444 traverse the membrane as a helical segment; sequence ATTLAGLVLIPGGALGQLLGGVIV. Topologically, residues 445-448 are cytoplasmic; it reads STLE. A helical membrane pass occupies residues 449–472; the sequence is MSCKALMRFIMVTSVISLILLVFI. Residues 473–581 lie on the Extracellular side of the membrane; that stretch reads IFVRCNPVQF…DAKCYKLPLF (109 aa). Residues 496-551 enclose the Kazal-like domain; it reads GNLTAPCNEKCRCSSSIYSSICGRDDIEYFSPCFAGCTYSKAQNQKKMYYNCSCIK. Residue asparagine 497 is glycosylated (N-linked (GlcNAc...) asparagine). 3 disulfides stabilise this stretch: cysteine 502–cysteine 532, cysteine 508–cysteine 528, and cysteine 517–cysteine 549. A glycan (N-linked (GlcNAc...) asparagine) is linked at asparagine 546. Residues 582 to 604 traverse the membrane as a helical segment; that stretch reads IAFIFSTLIFSGFSGVPIVLAMT. The Cytoplasmic portion of the chain corresponds to 605–613; that stretch reads RVVPDKLRS. Residues 614-639 traverse the membrane as a helical segment; sequence LALGVSYVILRIFGTIPGPSIFKMSG. Residues 640–673 lie on the Extracellular side of the membrane; that stretch reads ETSCILRDVNKCGHTGRCWIYNKTKMAFLLVGIC. N-linked (GlcNAc...) asparagine glycosylation occurs at asparagine 661. Residues 674–691 form a helical membrane-spanning segment; that stretch reads FLCKLCTIIFTTIAFFIY. The Cytoplasmic segment spans residues 692 to 719; sequence KRRLNENTDFPDVTVKNPKVKKKEETDL.

The protein belongs to the organo anion transporter (TC 2.A.60) family. Strongly expressed in testis. Weakly expressed in spleen, brain, fetal brain and placenta. Detected in lung tumors.

The protein localises to the cell membrane. The sequence is that of Solute carrier organic anion transporter family member 6A1 (SLCO6A1) from Homo sapiens (Human).